The chain runs to 585 residues: Proline--tRNA ligase (585 aa).

This sequence belongs to the class-II aminoacyl-tRNA synthetase family. ProS type 1 subfamily. In terms of assembly, homodimer.

The protein localises to the cytoplasm. It catalyses the reaction tRNA(Pro) + L-proline + ATP = L-prolyl-tRNA(Pro) + AMP + diphosphate. Catalyzes the attachment of proline to tRNA(Pro) in a two-step reaction: proline is first activated by ATP to form Pro-AMP and then transferred to the acceptor end of tRNA(Pro). As ProRS can inadvertently accommodate and process non-cognate amino acids such as alanine and cysteine, to avoid such errors it has two additional distinct editing activities against alanine. One activity is designated as 'pretransfer' editing and involves the tRNA(Pro)-independent hydrolysis of activated Ala-AMP. The other activity is designated 'posttransfer' editing and involves deacylation of mischarged Ala-tRNA(Pro). The misacylated Cys-tRNA(Pro) is not edited by ProRS. The chain is Proline--tRNA ligase from Corynebacterium diphtheriae (strain ATCC 700971 / NCTC 13129 / Biotype gravis).